The chain runs to 456 residues: MDPVRFPEIFHRLGGGGGGGGDLLGGGEADGLMRALCEGLRVGEEDCARFVLYGVAYWQGGRCPEWVAHITRCADLSCFATYLLTCHRSGGCEFTGGRVARDRLPSLRESVEVLQSLFLAFTLVIFKSMRVGVEAAGGAFRRMARDVHWNLLLTLGLDKAAPAFMAAAGLGEYSLPLVRCNNNMLNVLVGMKRKSRNHFQNDTPLSVPAPHLRLEPRCMFLREGRAEAPLSDHDLSFLKALRDGGRTVPCGNPFNAMVGALAFQSMAASRYVVLPNTTDIKSFTAHDLYSKIIGYNILCPFLSVPVHRGYRGGDGAGARLAVVCAECGYCLNLGKGKFSKVSFNPTHIFYCRDQKEKYLTTCASTGRIYCSFCGSCRIRTYPLKFTVGNRQYIRAVGASNCSIVVSDSATELDLVLPCLGDDCTQVLLRRVAVCDLFYLTELGPGLYCSRCLKPTS.

Belongs to the herpesviridae UL49 family.

This is an uncharacterized protein from Equus caballus (Horse).